The following is a 195-amino-acid chain: HTH-type transcriptional regulator BetI (195 aa).

Residues 8 to 68 (EIRRAQLIDA…ATMRHVLRDL (61 aa)) form the HTH tetR-type domain. Residues 31–50 (TLASVAQRASISTGIVSHYF) constitute a DNA-binding region (H-T-H motif).

It functions in the pathway amine and polyamine biosynthesis; betaine biosynthesis via choline pathway [regulation]. Repressor involved in the biosynthesis of the osmoprotectant glycine betaine. It represses transcription of the choline transporter BetT and the genes of BetAB involved in the synthesis of glycine betaine. The protein is HTH-type transcriptional regulator BetI of Paraburkholderia phytofirmans (strain DSM 17436 / LMG 22146 / PsJN) (Burkholderia phytofirmans).